We begin with the raw amino-acid sequence, 221 residues long: Small ribosomal subunit protein uS3 (221 aa).

The 69-residue stretch at 39–107 folds into the KH type-2 domain; the sequence is IREYIKRKLY…QVHVNIVEVK (69 aa).

Belongs to the universal ribosomal protein uS3 family. Part of the 30S ribosomal subunit. Forms a tight complex with proteins S10 and S14.

Binds the lower part of the 30S subunit head. Binds mRNA in the 70S ribosome, positioning it for translation. The polypeptide is Small ribosomal subunit protein uS3 (Desulforamulus reducens (strain ATCC BAA-1160 / DSM 100696 / MI-1) (Desulfotomaculum reducens)).